The chain runs to 865 residues: Protein translocase subunit SecA (865 aa).

ATP-binding positions include Q93, 111 to 115 (GEGKT), and D501. Zn(2+) contacts are provided by C841, C843, C852, and C853.

It belongs to the SecA family. In terms of assembly, monomer and homodimer. Part of the essential Sec protein translocation apparatus which comprises SecA, SecYEG and auxiliary proteins SecDF-YajC and YidC. It depends on Zn(2+) as a cofactor.

It is found in the cell inner membrane. Its subcellular location is the cytoplasm. It carries out the reaction ATP + H2O + cellular proteinSide 1 = ADP + phosphate + cellular proteinSide 2.. Part of the Sec protein translocase complex. Interacts with the SecYEG preprotein conducting channel. Has a central role in coupling the hydrolysis of ATP to the transfer of proteins into and across the cell membrane, serving as an ATP-driven molecular motor driving the stepwise translocation of polypeptide chains across the membrane. The chain is Protein translocase subunit SecA from Helicobacter pylori (strain P12).